Consider the following 323-residue polypeptide: Putative ABC transporter substrate-binding lipoprotein YhfQ (323 aa).

An N-terminal signal peptide occupies residues 1–19 (MKKTLIILTVLLLSVLTAA). Cysteine 20 carries N-palmitoyl cysteine lipidation. Cysteine 20 carries S-diacylglycerol cysteine lipidation. A Fe/B12 periplasmic-binding domain is found at 51 to 322 (RVVVLELGFI…ELQKEMPAAK (272 aa)).

Belongs to the bacterial solute-binding protein 8 family. Interacts with FloT.

It localises to the cell membrane. The protein localises to the membrane raft. The protein is Putative ABC transporter substrate-binding lipoprotein YhfQ (yhfQ) of Bacillus subtilis (strain 168).